We begin with the raw amino-acid sequence, 282 residues long: Caspase-3 (282 aa).

Residues His131 and Cys174 contribute to the active site.

It belongs to the peptidase C14A family. As to quaternary structure, heterotetramer that consists of two anti-parallel arranged heterodimers, each one formed by a 17 kDa (p17) and a 12 kDa (p12) subunit.

The protein resides in the cytoplasm. It carries out the reaction Strict requirement for an Asp residue at positions P1 and P4. It has a preferred cleavage sequence of Asp-Xaa-Xaa-Asp-|- with a hydrophobic amino-acid residue at P2 and a hydrophilic amino-acid residue at P3, although Val or Ala are also accepted at this position.. In terms of biological role, important mediator of apoptosis. At the onset of apoptosis, it proteolytically cleaves poly(ADP-ribose) polymerase PARP1 at a '216-Asp-|-Gly-217' bond. The sequence is that of Caspase-3 (casp3) from Xenopus laevis (African clawed frog).